Consider the following 309-residue polypeptide: Olfactory receptor 8B4 (309 aa).

At 1-25 (MTLRNSSSVTEFILVGLSEQPELQL) the chain is on the extracellular side. N5 is a glycosylation site (N-linked (GlcNAc...) asparagine). Residues 26–46 (PLFLLFLGIYVFTVVGNLGLI) form a helical membrane-spanning segment. Over 47-54 (TLIGINPS) the chain is Cytoplasmic. Residues 55–75 (LHTPMYFFLFNLSFIDLCYSC) traverse the membrane as a helical segment. Residues 76 to 98 (VFTPKMLNDFVSESIISYVGCMT) are Extracellular-facing. An intrachain disulfide couples C96 to C188. Residues 99-119 (QLFFFCFFVNSECYVLVSMAY) traverse the membrane as a helical segment. Residues 120 to 138 (DRYVAICNPLLYMVTMSPR) lie on the Cytoplasmic side of the membrane. The helical transmembrane segment at 139–159 (VCFLLMFGSYVVGFAGAMAHT) threads the bilayer. Topologically, residues 160 to 196 (GSMLRLTFCDSNVIDHYLCDVLPLLQLSCTSTHVSEL) are extracellular. A helical transmembrane segment spans residues 197–216 (VFFIVVGVITMLSSISIVIS). Topologically, residues 217-236 (YALILSNILCIPSAEGRSKA) are cytoplasmic. A helical transmembrane segment spans residues 237-257 (FSTWGSHIIAVALFFGSGTFT). Topologically, residues 258–270 (YLTTSFPGSMNHG) are extracellular. A helical membrane pass occupies residues 271–291 (RFASVFYTNVVPMLNPSIYSL). Over 292–309 (RNKDDKLALGKTLKRVLF) the chain is Cytoplasmic.

This sequence belongs to the G-protein coupled receptor 1 family.

The protein localises to the cell membrane. Its function is as follows. Odorant receptor. The sequence is that of Olfactory receptor 8B4 (OR8B4) from Homo sapiens (Human).